A 162-amino-acid polypeptide reads, in one-letter code: Caveolin-2 (162 aa).

At 1-86 (MGLETEKADV…FEISKYVMYK (86 aa)) the chain is on the cytoplasmic side. Position 19 is a phosphotyrosine; by SRC (tyrosine 19). Phosphoserine occurs at positions 20 and 23. Tyrosine 27 is modified (phosphotyrosine; by SRC). Residue serine 36 is modified to Phosphoserine. The helical intramembrane region spans 87–107 (FLTVFLAIPLAFLAGILFATL). Residues 108-162 (SCLHIWIIMPFVKTCLMVLPSVQTIWKSVTDAIIAPLCTSIGRSFSSVSLQLSQD) are Cytoplasmic-facing.

The protein belongs to the caveolin family. As to quaternary structure, monomer or homodimer. Interacts with CAV1; the interaction forms a stable heterooligomeric complex that is required for targeting to lipid rafts and for caveolae formation. Tyrosine phosphorylated forms do not form heterooligomers with the Tyr-19-phosphorylated form existing as a monomer or dimer, and the Tyr-27-form as a monomer only. Interacts (tyrosine phosphorylated form) with the SH2 domain-containing proteins, RASA1, NCK1 and SRC. Interacts (tyrosine phosphorylated form) with INSR, the interaction (Tyr-27-phosphorylated form) is increased on insulin stimulation. Interacts (Tyr-19 phosphorylated form) with MAPK1 (phosphorylated form); the interaction, promoted by insulin, leads to nuclear location and MAPK1 activation. Interacts with STAT3; the interaction is increased on insulin-induced tyrosine phosphorylation leading to STAT activation. Phosphorylated on serine and tyrosine residues. CAV1 promotes phosphorylation on Ser-23 which then targets the complex to the plasma membrane, lipid rafts and caveolae. Phosphorylation on Ser-36 appears to modulate mitosis in endothelial cells. Phosphorylation on both Tyr-19 and Tyr-27 is required for insulin-induced 'Ser-727' phosphorylation of STAT3 and its activation. Phosphorylation on Tyr-19 is required for insulin-induced phosphorylation of MAPK1 and DNA binding of STAT3. Tyrosine phosphorylation is induced by both EGF and insulin (By. similarity).

The protein resides in the nucleus. Its subcellular location is the cytoplasm. It is found in the golgi apparatus membrane. The protein localises to the cell membrane. It localises to the membrane. The protein resides in the caveola. In terms of biological role, may act as a scaffolding protein within caveolar membranes. Interacts directly with G-protein alpha subunits and can functionally regulate their activity. Acts as an accessory protein in conjunction with CAV1 in targeting to lipid rafts and driving caveolae formation. The Ser-36 phosphorylated form has a role in modulating mitosis in endothelial cells. Positive regulator of cellular mitogenesis of the MAPK signaling pathway. Required for the insulin-stimulated nuclear translocation and activation of MAPK1 and STAT3, and the subsequent regulation of cell cycle progression. The polypeptide is Caveolin-2 (CAV2) (Callithrix jacchus (White-tufted-ear marmoset)).